The chain runs to 430 residues: DNA polymerase IV 1 (430 aa).

One can recognise a UmuC domain in the interval 45–225; that stretch reads LAHIDCDAFY…KPVTLIWGVG (181 aa). 2 residues coordinate Mg(2+): D49 and D142. The active site involves E143.

The protein belongs to the DNA polymerase type-Y family. In terms of assembly, monomer. Mg(2+) is required as a cofactor.

The protein resides in the cytoplasm. It carries out the reaction DNA(n) + a 2'-deoxyribonucleoside 5'-triphosphate = DNA(n+1) + diphosphate. Poorly processive, error-prone DNA polymerase involved in untargeted mutagenesis. Copies undamaged DNA at stalled replication forks, which arise in vivo from mismatched or misaligned primer ends. These misaligned primers can be extended by PolIV. Exhibits no 3'-5' exonuclease (proofreading) activity. May be involved in translesional synthesis, in conjunction with the beta clamp from PolIII. The chain is DNA polymerase IV 1 (dinB1) from Rhizobium meliloti (strain 1021) (Ensifer meliloti).